Here is a 236-residue protein sequence, read N- to C-terminus: Thioredoxin-like 2-2, chloroplastic (236 aa).

The N-terminal 82 residues, 1-82 (MAGVVRLTTT…LRRPKSQVVR (82 aa)), are a transit peptide targeting the chloroplast. Residues 83-220 (VKVDENVAET…QLELGITLQT (138 aa)) form the Thioredoxin domain. Catalysis depends on nucleophile residues Cys-135 and Cys-138. An intrachain disulfide couples Cys-135 to Cys-138.

Belongs to the thioredoxin family.

The protein localises to the plastid. Its subcellular location is the chloroplast. Its function is as follows. Thiol-disulfide oxidoreductase that may participate in various redox reactions. Possesses insulin disulfide bonds reducing activity. The sequence is that of Thioredoxin-like 2-2, chloroplastic from Arabidopsis thaliana (Mouse-ear cress).